Consider the following 397-residue polypeptide: Elongation factor Tu-1 (397 aa).

The 197-residue stretch at 10-206 folds into the tr-type G domain; it reads KPHVNIGTIG…AVDESIPEPE (197 aa). Residues 19–26 are G1; that stretch reads GHIDHGKT. 19-26 is a GTP binding site; it reads GHIDHGKT. T26 is a Mg(2+) binding site. Residues 62-66 are G2; it reads GITIS. Residues 83–86 form a G3 region; the sequence is DCPG. Residues 83–87 and 138–141 contribute to the GTP site; these read DCPGH and NKAD. The tract at residues 138 to 141 is G4; it reads NKAD. The tract at residues 176-178 is G5; that stretch reads SAL.

Belongs to the TRAFAC class translation factor GTPase superfamily. Classic translation factor GTPase family. EF-Tu/EF-1A subfamily. In terms of assembly, monomer.

Its subcellular location is the cytoplasm. It carries out the reaction GTP + H2O = GDP + phosphate + H(+). GTP hydrolase that promotes the GTP-dependent binding of aminoacyl-tRNA to the A-site of ribosomes during protein biosynthesis. This Streptomyces ramocissimus protein is Elongation factor Tu-1.